The following is a 30-amino-acid chain: Cyclotide cter-P (30 aa).

The cyclopeptide (Gly-Asn) cross-link spans 1–30 (GIPCGESCVFIPCITAAIGCSCKSKVCYRN). Cystine bridges form between Cys-4–Cys-20, Cys-8–Cys-22, and Cys-13–Cys-27.

Post-translationally, this is a cyclic peptide.

It is found in the secreted. In terms of biological role, probably participates in a plant defense mechanism. The sequence is that of Cyclotide cter-P from Clitoria ternatea (Butterfly pea).